We begin with the raw amino-acid sequence, 129 residues long: Glutaredoxin-like protein ECU08_1380 (129 aa).

Positions 26–126 (EADYGEMVRR…PLLTQNREPV (101 aa)) constitute a Glutaredoxin domain.

The protein belongs to the glutaredoxin family.

The protein localises to the cytoplasm. Functionally, has a glutathione-disulfide oxidoreductase activity in the presence of NADPH and glutathione reductase. Reduces low molecular weight disulfides and proteins. The polypeptide is Glutaredoxin-like protein ECU08_1380 (Encephalitozoon cuniculi (strain GB-M1) (Microsporidian parasite)).